The chain runs to 285 residues: Probable endonuclease 4 (285 aa).

9 residues coordinate Zn(2+): His-69, His-109, Glu-145, Asp-179, His-182, His-216, Asp-229, His-231, and Glu-261.

This sequence belongs to the AP endonuclease 2 family. Requires Zn(2+) as cofactor.

It carries out the reaction Endonucleolytic cleavage to 5'-phosphooligonucleotide end-products.. In terms of biological role, endonuclease IV plays a role in DNA repair. It cleaves phosphodiester bonds at apurinic or apyrimidinic (AP) sites, generating a 3'-hydroxyl group and a 5'-terminal sugar phosphate. This chain is Probable endonuclease 4, found in Shigella sonnei (strain Ss046).